The sequence spans 651 residues: L-type lectin-domain containing receptor kinase IX.1 (651 aa).

The signal sequence occupies residues Met-1–Ser-19. The legume-lectin like stretch occupies residues Val-20–Ser-251. At Val-20–Met-269 the chain is on the extracellular side. Residues Asn-23, Asn-125, Asn-129, Asn-162, Asn-169, Asn-174, Asn-195, and Asn-211 are each glycosylated (N-linked (GlcNAc...) asparagine). A helical transmembrane segment spans residues Ile-270–Val-290. Over Phe-291–Arg-651 the chain is Cytoplasmic. The Protein kinase domain maps to Phe-335 to Leu-616. ATP is bound by residues Leu-341–Val-349 and Lys-364. Catalysis depends on Asp-459, which acts as the Proton acceptor. The disordered stretch occupies residues Ser-630 to Arg-651.

It in the C-terminal section; belongs to the protein kinase superfamily. Ser/Thr protein kinase family. This sequence in the N-terminal section; belongs to the leguminous lectin family. Interacts with ABCG40.

It localises to the cell membrane. It catalyses the reaction L-seryl-[protein] + ATP = O-phospho-L-seryl-[protein] + ADP + H(+). It carries out the reaction L-threonyl-[protein] + ATP = O-phospho-L-threonyl-[protein] + ADP + H(+). Functionally, promotes hydrogen peroxide H(2)O(2) production and cell death. Involved in resistance response to the pathogenic oomycetes Phytophthora infestans and Phytophthora capsici. The protein is L-type lectin-domain containing receptor kinase IX.1 of Arabidopsis thaliana (Mouse-ear cress).